The primary structure comprises 124 residues: CRISPR-associated endoribonuclease Cas2 4 (124 aa).

Asp-40 contributes to the Mg(2+) binding site.

This sequence belongs to the CRISPR-associated endoribonuclease Cas2 protein family. As to quaternary structure, homodimer, forms a heterotetramer with a Cas1 homodimer. Mg(2+) serves as cofactor.

Its function is as follows. CRISPR (clustered regularly interspaced short palindromic repeat), is an adaptive immune system that provides protection against mobile genetic elements (viruses, transposable elements and conjugative plasmids). CRISPR clusters contain sequences complementary to antecedent mobile elements and target invading nucleic acids. CRISPR clusters are transcribed and processed into CRISPR RNA (crRNA). Functions as a ssRNA-specific endoribonuclease. Involved in the integration of spacer DNA into the CRISPR cassette. This is CRISPR-associated endoribonuclease Cas2 4 from Rhodospirillum rubrum (strain ATCC 11170 / ATH 1.1.1 / DSM 467 / LMG 4362 / NCIMB 8255 / S1).